Here is a 486-residue protein sequence, read N- to C-terminus: Ribulose bisphosphate carboxylase large chain (486 aa).

Residues Asn126 and Thr176 each coordinate substrate. Lys178 (proton acceptor) is an active-site residue. Substrate is bound at residue Lys180. Mg(2+)-binding residues include Lys204, Asp206, and Glu207. Lys204 carries the N6-carboxylysine modification. The active-site Proton acceptor is His296. Residues Arg297, His329, and Ser381 each contribute to the substrate site.

This sequence belongs to the RuBisCO large chain family. Type I subfamily. In terms of assembly, heterohexadecamer of 8 large chains and 8 small chains. Mg(2+) is required as a cofactor.

It carries out the reaction 2 (2R)-3-phosphoglycerate + 2 H(+) = D-ribulose 1,5-bisphosphate + CO2 + H2O. The enzyme catalyses D-ribulose 1,5-bisphosphate + O2 = 2-phosphoglycolate + (2R)-3-phosphoglycerate + 2 H(+). Its function is as follows. RuBisCO catalyzes two reactions: the carboxylation of D-ribulose 1,5-bisphosphate, the primary event in carbon dioxide fixation, as well as the oxidative fragmentation of the pentose substrate. Both reactions occur simultaneously and in competition at the same active site. The protein is Ribulose bisphosphate carboxylase large chain of Cupriavidus taiwanensis (strain DSM 17343 / BCRC 17206 / CCUG 44338 / CIP 107171 / LMG 19424 / R1) (Ralstonia taiwanensis (strain LMG 19424)).